Reading from the N-terminus, the 84-residue chain is Large ribosomal subunit protein bL27 (84 aa).

The segment at 1 to 21 is disordered; that stretch reads MAHKKGAGSTKNGRDSKPKML.

This sequence belongs to the bacterial ribosomal protein bL27 family.

This Dehalococcoides mccartyi (strain ATCC BAA-2100 / JCM 16839 / KCTC 5957 / BAV1) protein is Large ribosomal subunit protein bL27.